The chain runs to 533 residues: L-aspartate oxidase (533 aa).

Residues 16–19, lysine 38, 45–52, and aspartate 223 contribute to the FAD site; these read SGAA and ATFYAQGG. The active-site Proton donor/acceptor is the arginine 290. FAD-binding positions include glutamate 375 and 391-392; that span reads SL.

The protein belongs to the FAD-dependent oxidoreductase 2 family. NadB subfamily. FAD is required as a cofactor.

Its subcellular location is the cytoplasm. It carries out the reaction L-aspartate + O2 = iminosuccinate + H2O2. It participates in cofactor biosynthesis; NAD(+) biosynthesis; iminoaspartate from L-aspartate (oxidase route): step 1/1. Functionally, catalyzes the oxidation of L-aspartate to iminoaspartate, the first step in the de novo biosynthesis of NAD(+). This is L-aspartate oxidase (nadB) from Yersinia pestis.